We begin with the raw amino-acid sequence, 996 residues long: RNA2 polyprotein (996 aa).

The segment at 363-369 (LRYTIGG) is involved in tubule formation by the movement protein. A disordered region spans residues 368-398 (GGSKPKNKLADKAHNEEAETSDSKGIIDPKD). Over residues 375–398 (KLADKAHNEEAETSDSKGIIDPKD) the composition is skewed to basic and acidic residues.

As to quaternary structure, interacts with the large capsid protein. In terms of assembly, interacts with the small capsid protein. Homomultimer; assembles as pentons. Interacts with the movement protein (via C-terminus). Interacts (via C-terminus) with the large capsid protein. In terms of processing, specific enzymatic cleavages by picornain 3C-like protease in vivo yield mature proteins.

It localises to the host cell junction. Its subcellular location is the host plasmodesma. The protein resides in the virion. In terms of biological role, responsible for viral RNA2 accumulation. May function by recruiting the RNA1-encoded polyprotein that contains the replication protein to RNA2 and enable its replication. Transports the viral genome to neighboring plant cells directly through plasmosdesmata, without any budding. The movement protein allows efficient cell to cell propagation, by bypassing the host cell wall barrier. Acts by forming a tubular structure at the host plasmodesmata, enlarging it enough to allow free passage of virion capsids. Binds to GTP and to single-stranded RNA and single-stranded DNA in a non-sequence-specific manner. Its function is as follows. Together with the mature small capsid protein, forms an icosahedral capsid (T=3) enclosing the viral positive strand RNA genome, with a diameter of approximately 300 Angstroms. The capsid is formed from 60 copies each of the large and the mature small capsid protein. The large capsid protein interacts with the viral RNA. Functionally, together with the large capsid protein, forms an icosahedral capsid (T=3) enclosing the viral positive strand RNA genome, with a diameter of approximately 300 Angstroms. The capsid is formed from 60 copies each of the large and the mature small capsid protein. The mature small capsid protein forms the turrets at the fivefold axes of the viral particle. The sequence is that of RNA2 polyprotein from Red clover mottle virus (RCMV).